Consider the following 377-residue polypeptide: Chaperone protein DnaJ (377 aa).

The J domain occupies 5–70; sequence DYYEILGVSK…QKRAAYDQYG (66 aa). The segment at 132–210 adopts a CR-type zinc-finger fold; sequence GVTKEIRIPT…CHGHGRVEKT (79 aa). The Zn(2+) site is built by Cys145, Cys148, Cys162, Cys165, Cys184, Cys187, Cys198, and Cys201. CXXCXGXG motif repeat units lie at residues 145–152, 162–169, 184–191, and 198–205; these read CDVCHGSG, CPTCHGAG, CPHCQGRG, and CNKCHGHG.

It belongs to the DnaJ family. As to quaternary structure, homodimer. The cofactor is Zn(2+).

It localises to the cytoplasm. In terms of biological role, participates actively in the response to hyperosmotic and heat shock by preventing the aggregation of stress-denatured proteins and by disaggregating proteins, also in an autonomous, DnaK-independent fashion. Unfolded proteins bind initially to DnaJ; upon interaction with the DnaJ-bound protein, DnaK hydrolyzes its bound ATP, resulting in the formation of a stable complex. GrpE releases ADP from DnaK; ATP binding to DnaK triggers the release of the substrate protein, thus completing the reaction cycle. Several rounds of ATP-dependent interactions between DnaJ, DnaK and GrpE are required for fully efficient folding. Also involved, together with DnaK and GrpE, in the DNA replication of plasmids through activation of initiation proteins. In Klebsiella pneumoniae (strain 342), this protein is Chaperone protein DnaJ.